Here is a 367-residue protein sequence, read N- to C-terminus: 3-isopropylmalate dehydrogenase (367 aa).

75–88 (GPKWDGIERSKRPE) serves as a coordination point for NAD(+). Substrate contacts are provided by R95, R105, R133, and D230. Mg(2+)-binding residues include D230, D254, and D258. 288–300 (GSAPDIAGQDIAN) contributes to the NAD(+) binding site.

This sequence belongs to the isocitrate and isopropylmalate dehydrogenases family. LeuB type 1 subfamily. Homodimer. Requires Mg(2+) as cofactor. The cofactor is Mn(2+).

The protein resides in the cytoplasm. The catalysed reaction is (2R,3S)-3-isopropylmalate + NAD(+) = 4-methyl-2-oxopentanoate + CO2 + NADH. Its pathway is amino-acid biosynthesis; L-leucine biosynthesis; L-leucine from 3-methyl-2-oxobutanoate: step 3/4. Its function is as follows. Catalyzes the oxidation of 3-carboxy-2-hydroxy-4-methylpentanoate (3-isopropylmalate) to 3-carboxy-4-methyl-2-oxopentanoate. The product decarboxylates to 4-methyl-2 oxopentanoate. The polypeptide is 3-isopropylmalate dehydrogenase (Psychrobacter arcticus (strain DSM 17307 / VKM B-2377 / 273-4)).